The sequence spans 250 residues: NH(3)-dependent NAD(+) synthetase (250 aa).

Gly-30–Ser-37 provides a ligand contact to ATP. Asp-36 is a binding site for Mg(2+). Deamido-NAD(+) is bound at residue Arg-117. Thr-137 is an ATP binding site. Glu-142 provides a ligand contact to Mg(2+). Deamido-NAD(+) is bound by residues Lys-150 and Asp-157. 2 residues coordinate ATP: Lys-166 and Ser-188. Position 234-235 (His-234–Lys-235) interacts with deamido-NAD(+).

It belongs to the NAD synthetase family. Homodimer.

The catalysed reaction is deamido-NAD(+) + NH4(+) + ATP = AMP + diphosphate + NAD(+) + H(+). It functions in the pathway cofactor biosynthesis; NAD(+) biosynthesis; NAD(+) from deamido-NAD(+) (ammonia route): step 1/1. Functionally, catalyzes the ATP-dependent amidation of deamido-NAD to form NAD. Uses ammonia as a nitrogen source. This chain is NH(3)-dependent NAD(+) synthetase, found in Mannheimia succiniciproducens (strain KCTC 0769BP / MBEL55E).